A 428-amino-acid chain; its full sequence is GTPase Obg (428 aa).

In terms of domain architecture, Obg spans 1 to 158 (MFIDQVKIYV…RDVILELKVL (158 aa)). One can recognise an OBG-type G domain in the interval 159-329 (ADVGLVGFPS…LLFEVANLIE (171 aa)). GTP is bound by residues 165 to 172 (GFPSVGKS), 190 to 194 (FTTIV), 212 to 215 (DLPG), 282 to 285 (NKMD), and 310 to 312 (SAV). Mg(2+) is bound by residues Ser-172 and Thr-192. The OCT domain occupies 350–428 (KFETEGVKFD…ILEYEFEFID (79 aa)).

This sequence belongs to the TRAFAC class OBG-HflX-like GTPase superfamily. OBG GTPase family. As to quaternary structure, monomer. It depends on Mg(2+) as a cofactor.

Its subcellular location is the cytoplasm. An essential GTPase which binds GTP, GDP and possibly (p)ppGpp with moderate affinity, with high nucleotide exchange rates and a fairly low GTP hydrolysis rate. Plays a role in control of the cell cycle, stress response, ribosome biogenesis and in those bacteria that undergo differentiation, in morphogenesis control. The polypeptide is GTPase Obg (Bacillus anthracis).